We begin with the raw amino-acid sequence, 163 residues long: Probable ribosome biogenesis protein RLP24 (163 aa).

Belongs to the eukaryotic ribosomal protein eL24 family. Associated with nucleolar and cytoplasmic pre-60S particles. At the end of biogenesis it dissociates from cytoplasmic pre-60S particles and is likely to be exchanged for its ribosomal homolog, RPL24.

The protein localises to the nucleus. It is found in the nucleolus. In terms of biological role, involved in the biogenesis of the 60S ribosomal subunit. Ensures the docking of GTPBP4/NOG1 to pre-60S particles. The polypeptide is Probable ribosome biogenesis protein RLP24 (RSL24D1) (Pongo abelii (Sumatran orangutan)).